A 955-amino-acid chain; its full sequence is Sex determination protein fruitless (955 aa).

Disordered regions lie at residues 1-55 (MMAT…HAHS) and 70-89 (IETD…LPLP). Positions 35 to 55 (PHGHGHLHSHAHAHGHGHAHS) are enriched in basic residues. Residues 76–89 (APPPPLPPPPLPLP) are compositionally biased toward pro residues. The BTB domain occupies 131-196 (CDVTLACEGE…MYKGEVNVGQ (66 aa)). Disordered stretches follow at residues 229-288 (LRDS…SMSE), 352-526 (NRSA…LGGG), and 784-814 (ANHQ…SGAG). Residues 233–246 (AASSPTGRGPSNYT) are compositionally biased toward polar residues. Basic and acidic residues-rich tracts occupy residues 258–279 (AMRE…DELT) and 360–379 (CSDR…RDDL). Low complexity predominate over residues 387 to 420 (KDNNNSNSSSTGGNNNNNNNNNNNSSSNNNNSSS). Basic and acidic residues predominate over residues 421–446 (NRERNNSGERERERERERERDRDREL). 2 stretches are compositionally biased toward low complexity: residues 464–475 (SSSNCDNSLSSS) and 790–814 (QHPP…SGAG). The segment at 918-941 (HECPVCGQKFTRRDNMKAHCKIKH) adopts a C2H2-type zinc-finger fold.

In terms of tissue distribution, expressed in parts of the adult male brain associated with the courtship song and steps of the male courtship. Also expressed in the larval and pupal male mushroom body and optic lobe. Expressed in pupal female optic lobe.

The protein localises to the nucleus. In terms of biological role, probably acts as a transcriptional regulator. Part of the somatic sex determination hierarchy; sex determination genes transformer (tra) and transformer-2 (tra-2) switch fru splicing from the male-specific pattern to the female-specific pattern through activation of the female-specific fru 5'-splice site. Vital for the development of males and females. Controls the development of the male specific abdominal muscle of Lawrence. Plays a role in male courtship behavior and sexual orientation. Enhances male-specific expression of takeout in brain-associated fat body. This Drosophila melanogaster (Fruit fly) protein is Sex determination protein fruitless (fru).